The sequence spans 338 residues: Heat shock factor 2-binding protein (338 aa).

The segment at 1–20 (MAATVGDGSGTEEACRNMES) is disordered. Residues 12–126 (EEACRNMESK…LLQQAEYCTQ (115 aa)) are a coiled coil. Positions 18 to 55 (MESKEEFVKVRKKDLERLTTEVMQIRDFLPRILNGELL) are interaction with BRME1. An interaction with BRCA2 region spans residues 87 to 338 (ARLETAQADS…EDLRALDCNV (252 aa)).

Interacts (via C-terminus) with BNC1. Associates with HSF2. The interaction seems to occur between the trimerization domain of HSF2 and the N-terminal hydrophilic region of HSF2BP. Interacts (via N-terminus) with BRME1. Interacts with BRCA2 and BRME1; the interactions are direct and allow the formation of a ternary complex. The complex BRME1:HSF2BP:BRCA2 interacts with SPATA22, MEIOB and RAD51. Sumoylated by UBE2I in response to MEKK1-mediated stimuli. In terms of tissue distribution, expressed in testis and, to a lesser extent, in lung and muscle.

Its subcellular location is the cytoplasm. It is found in the chromosome. Functionally, meiotic recombination factor component of recombination bridges involved in meiotic double-strand break repair. Modulates the localization of recombinases DMC1:RAD51 to meiotic double-strand break (DSB) sites through the interaction with BRCA2 and its recruitment during meiotic recombination. Indispensable for the DSB repair, homologous synapsis, and crossover formation that are needed for progression past metaphase I, is essential for spermatogenesis and male fertility. Required for proper recombinase recruitment in female meiosis. Inhibits BNC1 transcriptional activity during spermatogenesis, probably by sequestering it in the cytoplasm. May be involved in modulating HSF2 activation in testis. The protein is Heat shock factor 2-binding protein of Mus musculus (Mouse).